A 119-amino-acid chain; its full sequence is Beta-2-microglobulin (119 aa).

An N-terminal signal peptide occupies residues 1–20; that stretch reads MGRFVAVALLVLLSLSGLET. The 90-residue stretch at 25–114 folds into the Ig-like C1-type domain; sequence PKIQVYSRHP…VTFSTPKTVK (90 aa). Cys45 and Cys100 form a disulfide bridge.

It belongs to the beta-2-microglobulin family. In terms of assembly, heterodimer of an alpha chain and a beta chain. Beta-2-microglobulin is the beta-chain of major histocompatibility complex class I molecules.

The protein localises to the secreted. Component of the class I major histocompatibility complex (MHC). Involved in the presentation of peptide antigens to the immune system. The chain is Beta-2-microglobulin (B2M) from Callicebus personatus nigrifrons (Black-fronted titi).